Reading from the N-terminus, the 286-residue chain is Pyridoxal kinase PdxY (286 aa).

Substrate-binding positions include Ser9 and 44-45; that span reads TQ. ATP contacts are provided by residues Asp111, Ala143, Glu148, Lys181, and 208–211; that span reads RPLV. Asp223 is a substrate binding site.

The protein belongs to the pyridoxine kinase family. PdxY subfamily. Homodimer. The cofactor is Mg(2+).

It carries out the reaction pyridoxal + ATP = pyridoxal 5'-phosphate + ADP + H(+). It participates in cofactor metabolism; pyridoxal 5'-phosphate salvage; pyridoxal 5'-phosphate from pyridoxal: step 1/1. Its function is as follows. Pyridoxal kinase involved in the salvage pathway of pyridoxal 5'-phosphate (PLP). Catalyzes the phosphorylation of pyridoxal to PLP. In Yersinia pseudotuberculosis serotype I (strain IP32953), this protein is Pyridoxal kinase PdxY.